We begin with the raw amino-acid sequence, 238 residues long: Opacity protein opA68 (238 aa).

Residue Ala1 is a signal peptide. Residues 88 to 109 (NLQRRTSNGNRRDRKTENQENG) form a disordered region.

The protein belongs to the opacity porin family.

The protein resides in the cell outer membrane. Functionally, implicated in a number of adherence functions. OPA proteins are implicated in pathogenesis and are subject to phase variation. The sequence is that of Opacity protein opA68 from Neisseria gonorrhoeae.